The sequence spans 436 residues: N-lysine methyltransferase SMYD2 (436 aa).

The region spanning 10-244 (GGLERFASPG…PGEEVFTSYI (235 aa)) is the SET domain. Residue 20-22 (KGR) participates in S-adenosyl-L-methionine binding. The Zn(2+) site is built by cysteine 55, cysteine 58, cysteine 68, cysteine 71, cysteine 77, cysteine 81, histidine 89, and cysteine 93. The segment at 55 to 93 (CDGCFARKEGLSKCGRCKQAFYCNVECQKEDWPMHKLEC) adopts an MYND-type zinc-finger fold. S-adenosyl-L-methionine-binding positions include histidine 140, 209–210 (NH), and 261–263 (YFF).

The protein belongs to the class V-like SAM-binding methyltransferase superfamily.

Its subcellular location is the cytoplasm. The protein localises to the cytosol. It localises to the nucleus. It carries out the reaction L-lysyl(4)-[histone H3] + 3 S-adenosyl-L-methionine = N(6),N(6),N(6)-trimethyl-L-lysyl(4)-[histone H3] + 3 S-adenosyl-L-homocysteine + 3 H(+). The catalysed reaction is L-lysyl-[protein] + S-adenosyl-L-methionine = N(6)-methyl-L-lysyl-[protein] + S-adenosyl-L-homocysteine + H(+). Protein-lysine N-methyltransferase that methylates both histones and non-histone proteins, including p53/TP53 and RB1. Specifically trimethylates histone H3 'Lys-4' (H3K4me3) in vivo. The activity requires interaction with HSP90alpha. Shows even higher methyltransferase activity on p53/TP53. Monomethylates 'Lys-370' of p53/TP53, leading to decreased DNA-binding activity and subsequent transcriptional regulation activity of p53/TP53. Monomethylates RB1 at 'Lys-860'. The sequence is that of N-lysine methyltransferase SMYD2 (SMYD2) from Gallus gallus (Chicken).